The primary structure comprises 335 residues: DNA-directed RNA polymerase subunit alpha (335 aa).

The tract at residues 1 to 233 (MVREKITVST…DLFIPFLHME (233 aa)) is alpha N-terminal domain (alpha-NTD). The tract at residues 265-335 (KEIALKSIFI…KQLVIFLPKK (71 aa)) is alpha C-terminal domain (alpha-CTD).

Belongs to the RNA polymerase alpha chain family. In plastids the minimal PEP RNA polymerase catalytic core is composed of four subunits: alpha, beta, beta', and beta''. When a (nuclear-encoded) sigma factor is associated with the core the holoenzyme is formed, which can initiate transcription.

The protein localises to the plastid. It localises to the chloroplast. The catalysed reaction is RNA(n) + a ribonucleoside 5'-triphosphate = RNA(n+1) + diphosphate. In terms of biological role, DNA-dependent RNA polymerase catalyzes the transcription of DNA into RNA using the four ribonucleoside triphosphates as substrates. This Coffea arabica (Arabian coffee) protein is DNA-directed RNA polymerase subunit alpha.